A 1080-amino-acid chain; its full sequence is Zorya protein ZorD (1080 aa).

The Helicase ATP-binding domain occupies 596–779 (LRSPEETAGC…WSLFDFAQPG (184 aa)). The Helicase C-terminal domain maps to 904 to 1069 (KLNWLLKILA…DMLCATPDLS (166 aa)).

Its function is as follows. Component of antiviral defense system Zorya type I, composed of ZorA, ZorB, ZorC and ZorD. Expression of Zorya type I in E.coli (strain MG1655) confers 10,000-fold resistance to phage SECphi27, 100-fold resistance to lambda, and 10-fold resistance to T7. While most T7 infected Zorya-containing cells undergo abortive infection, a minority produce viable phage progeny. These eventually accumulate to a high multiplicity of infection, leading to culture collapse by 2 hours after initial infection. ZorA and ZorB probably assemble in the cell inner membrane and exert their effect there. This may have ATPase activity. This Escherichia coli O139:H28 (strain E24377A / ETEC) protein is Zorya protein ZorD.